Reading from the N-terminus, the 711-residue chain is Zinc finger CCCH domain-containing protein 43 (711 aa).

The interval 1–49 (MPQDDDWFWGRPTPVVVGDGETTSKPKPPVAGKTKKVEEQHPRRPGEPD) is disordered. Basic and acidic residues predominate over residues 35-47 (KKVEEQHPRRPGE). 3 C3H1-type zinc fingers span residues 44-72 (RPGEPDCSYYVKFGSCKFGISCVYNHPDP), 90-118 (RPGEPDCSYYVKFGSCKFGMNCRFNHPPR), and 157-185 (RPGTGLCSYYMNRGICKFGTNCKFDHPDP). The 254-residue stretch at 384–637 (LKTLKSILNT…GAISYLIEKE (254 aa)) folds into the MIF4G domain.

The chain is Zinc finger CCCH domain-containing protein 43 from Oryza sativa subsp. japonica (Rice).